Reading from the N-terminus, the 529-residue chain is Bifunctional purine biosynthesis protein PurH (529 aa).

Positions T2–T149 constitute an MGS-like domain.

The protein belongs to the PurH family.

It carries out the reaction (6R)-10-formyltetrahydrofolate + 5-amino-1-(5-phospho-beta-D-ribosyl)imidazole-4-carboxamide = 5-formamido-1-(5-phospho-D-ribosyl)imidazole-4-carboxamide + (6S)-5,6,7,8-tetrahydrofolate. It catalyses the reaction IMP + H2O = 5-formamido-1-(5-phospho-D-ribosyl)imidazole-4-carboxamide. Its pathway is purine metabolism; IMP biosynthesis via de novo pathway; 5-formamido-1-(5-phospho-D-ribosyl)imidazole-4-carboxamide from 5-amino-1-(5-phospho-D-ribosyl)imidazole-4-carboxamide (10-formyl THF route): step 1/1. The protein operates within purine metabolism; IMP biosynthesis via de novo pathway; IMP from 5-formamido-1-(5-phospho-D-ribosyl)imidazole-4-carboxamide: step 1/1. The chain is Bifunctional purine biosynthesis protein PurH from Cereibacter sphaeroides (strain ATCC 17029 / ATH 2.4.9) (Rhodobacter sphaeroides).